We begin with the raw amino-acid sequence, 345 residues long: Opioid-binding protein/cell adhesion molecule (345 aa).

A signal peptide spans 1-27 (MGVCGSLFQPWKCLVVVSLRLLFLVPT). 3 consecutive Ig-like C2-type domains span residues 39-126 (PKAM…PKTS), 136-219 (PQIM…VKIT), and 223-310 (PPYI…ASIT). N-linked (GlcNAc...) asparagine glycans are attached at residues N44, N70, and N140. A disulfide bridge connects residues C57 and C115. 2 cysteine pairs are disulfide-bonded: C157–C202 and C244–C296. N285, N293, and N306 each carry an N-linked (GlcNAc...) asparagine glycan. N322 carries GPI-anchor amidated asparagine lipidation. Residues 323 to 345 (SASRALACLWLSGTLFAHFFIKF) constitute a propeptide, removed in mature form.

The protein belongs to the immunoglobulin superfamily. IgLON family.

Its subcellular location is the cell membrane. In terms of biological role, binds opioids in the presence of acidic lipids; probably involved in cell contact. The polypeptide is Opioid-binding protein/cell adhesion molecule (OPCML) (Bos taurus (Bovine)).